A 122-amino-acid polypeptide reads, in one-letter code: MIQEESRVKVADNSGAKEVGIIRNLGGSVKKTSNIGDIVVCSIKKALPTGLVKEGQVVRAVVVRTKYGIKRKDGTHIKFDDNAVVILKEDGTPRATRVFGPVARELRDKGYLKIVSLAPEVL.

Belongs to the universal ribosomal protein uL14 family. Part of the 50S ribosomal subunit. Forms a cluster with proteins L3 and L19. In the 70S ribosome, L14 and L19 interact and together make contacts with the 16S rRNA in bridges B5 and B8.

Binds to 23S rRNA. Forms part of two intersubunit bridges in the 70S ribosome. This Mycoplasma mobile (strain ATCC 43663 / 163K / NCTC 11711) (Mesomycoplasma mobile) protein is Large ribosomal subunit protein uL14.